The primary structure comprises 785 residues: (+)-copalyl diphosphate synthase 3, chloroplastic (785 aa).

Lys238 contacts substrate. Mg(2+) contacts are provided by Asp371 and Asp373. Positions 371 to 374 (DIDD) match the DXDD motif motif. Lys457 is a substrate binding site.

The protein belongs to the terpene synthase family. Mg(2+) is required as a cofactor. Present in both leaves and flowers, with higher levels in leaves.

It is found in the plastid. The protein resides in the chloroplast. It catalyses the reaction (2E,6E,10E)-geranylgeranyl diphosphate = (+)-copalyl diphosphate. It participates in secondary metabolite biosynthesis; terpenoid biosynthesis. Involved in the biosynthesis of labdane-type diterpenoid including marrubiin and other labdane-related furanoid diterpenoids with potential applications as anti-diabetics, analgesics or vasorelaxants. Terpene synthase that produces (+)-copalyl diphosphate ((+)-CPP) from geranylgeranyl diphosphate (GGPP). The polypeptide is (+)-copalyl diphosphate synthase 3, chloroplastic (Marrubium vulgare (White horehound)).